A 310-amino-acid chain; its full sequence is Bifunctional phosphoglucose/phosphomannose isomerase (310 aa).

Positions 22 to 152 (FDGSFRTGTF…IRPKHEDIEE (131 aa)) constitute an SIS domain. D-fructose 6-phosphate is bound by residues G41, S42, S80, S82, T85, and R128. The active-site Proton acceptor is E202. Residues H218 and K306 each contribute to the D-fructose 6-phosphate site. H218 acts as the Proton donor in catalysis. K306 serves as the catalytic Proton acceptor.

It belongs to the PGI/PMI family. Homodimer.

The enzyme catalyses alpha-D-glucose 6-phosphate = beta-D-fructose 6-phosphate. It catalyses the reaction D-mannose 6-phosphate = D-fructose 6-phosphate. Its activity is regulated as follows. Inhibited by low concentrations of erythrose 4-phosphate and 6-phosphogluconate. Dual specificity isomerase that catalyzes the isomerization of both glucose-6-phosphate and mannose-6-phosphate to fructose-6-phosphate with similar catalytic efficiency. The polypeptide is Bifunctional phosphoglucose/phosphomannose isomerase (Thermoplasma acidophilum (strain ATCC 25905 / DSM 1728 / JCM 9062 / NBRC 15155 / AMRC-C165)).